We begin with the raw amino-acid sequence, 165 residues long: Group 10 secretory phospholipase A2 (165 aa).

Positions 1 to 31 (MGPLPVCLPIMLLLLLPSLLLLLLLPGPGSG) are cleaved as a signal peptide. A propeptide spanning residues 32–42 (EASRILRVHRR) is cleaved from the precursor. Disulfide bonds link cysteine 53–cysteine 111, cysteine 67–cysteine 157, cysteine 69–cysteine 85, cysteine 84–cysteine 139, cysteine 90–cysteine 164, cysteine 91–cysteine 132, cysteine 100–cysteine 125, and cysteine 118–cysteine 130. Ca(2+) contacts are provided by phenylalanine 68, glycine 70, and glycine 72. Histidine 88 is a catalytic residue. Aspartate 89 serves as a coordination point for Ca(2+). Asparagine 113 carries N-linked (GlcNAc...) asparagine glycosylation. Aspartate 133 is a catalytic residue.

The protein belongs to the phospholipase A2 family. As to quaternary structure, interacts with PLA2R1; this interaction mediates PLA2G10 clearance and inactivation. The cofactor is Ca(2+). In terms of tissue distribution, found in spleen, thymus, peripheral blood leukocytes, pancreas, lung, and colon. Expressed in neuronal fibers in dorsal root ganglia and in peripheral tissues including stomach, white adipose tissue and prostate (at protein level).

The protein resides in the secreted. The protein localises to the lysosome. It localises to the cytoplasmic vesicle. It is found in the secretory vesicle. Its subcellular location is the acrosome. It catalyses the reaction a 1,2-diacyl-sn-glycero-3-phosphocholine + H2O = a 1-acyl-sn-glycero-3-phosphocholine + a fatty acid + H(+). It carries out the reaction 1-hexadecanoyl-2-(9Z-octadecenoyl)-sn-glycero-3-phosphocholine + H2O = 1-hexadecanoyl-sn-glycero-3-phosphocholine + (9Z)-octadecenoate + H(+). The enzyme catalyses 1-octadecanoyl-2-(5Z,8Z,11Z,14Z-eicosatetraenoyl)-sn-glycero-3-phosphocholine + H2O = 1-octadecanoyl-sn-glycero-3-phosphocholine + (5Z,8Z,11Z,14Z)-eicosatetraenoate + H(+). The catalysed reaction is 1,2-dihexadecanoyl-sn-glycero-3-phosphocholine + H2O = 1-hexadecanoyl-sn-glycero-3-phosphocholine + hexadecanoate + H(+). It catalyses the reaction 1-hexadecanoyl-2-(9Z-octadecenoyl)-sn-glycero-3-phosphoglycerol + H2O = 1-hexadecanoyl-sn-glycero-3-phosphoglycerol + (9Z)-octadecenoate + H(+). It carries out the reaction 1,2-dihexadecanoyl-sn-glycero-3-phospho-(1'-sn-glycerol) + H2O = 1-hexadecanoyl-sn-glycero-3-phospho-(1'-sn-glycerol) + hexadecanoate + H(+). The enzyme catalyses 1-hexadecanoyl-2-(9Z-octadecenoyl)-sn-glycero-3-phospho-L-serine + H2O = 1-hexadecanoyl-sn-glycero-3-phospho-L-serine + (9Z)-octadecenoate + H(+). The catalysed reaction is 1-hexadecanoyl-2-(9Z,12Z-octadecadienoyl)-sn-glycero-3-phosphoethanolamine + H2O = 1-hexadecanoyl-sn-glycero-3-phosphoethanolamine + (9Z,12Z)-octadecadienoate + H(+). It catalyses the reaction 1-hexadecanoyl-2-(9Z-octadecenoyl)-sn-glycero-3-phosphate + H2O = 1-hexadecanoyl-sn-glycero-3-phosphate + (9Z)-octadecenoate + H(+). It carries out the reaction 1-O-hexadecyl-2-acetyl-sn-glycero-3-phosphocholine + H2O = 1-O-hexadecyl-sn-glycero-3-phosphocholine + acetate + H(+). Inhibited by methyl indoxam. Its function is as follows. Secretory calcium-dependent phospholipase A2 that primarily targets extracellular phospholipids. Hydrolyzes the ester bond of the fatty acyl group attached at sn-2 position of phospholipids with preference for phosphatidylcholines and phosphatidylglycerols over phosphatidylethanolamines. Preferentially releases sn-2 omega-6 and omega-3 polyunsaturated fatty acyl (PUFA) chains over saturated fatty acyls. Contributes to phospholipid remodeling of very low-density lipoprotein (VLDL), low-density lipoprotein (LDL) and high-density lipoprotein (HDL) particles. Hydrolyzes LDL phospholipids releasing unsaturated fatty acids that regulate macrophage differentiation toward foam cells. Efficiently hydrolyzes and inactivates platelet activating factor (PAF), a potent lipid mediator present in oxidized LDL. May act in an autocrine and paracrine manner. Secreted by lung epithelium, targets membrane phospholipids of infiltrating eosinophils, releasing arachidonate and boosting eicosanoid and cysteinyl leukotriene synthesis involved in airway inflammatory response. Secreted by gut epithelium, hydrolyzes dietary and biliary phosphatidylcholines in the gastrointestinal lumen. Plays a stem cell regulator role in colon epithelium. Within intracellular compartment, mediates Paneth-like cell differentiation and its stem cell supporting functions by inhibiting the Wnt signaling pathway in intestinal stem cell (ISC). Secreted in the intestinal lumen upon inflammation, acts in an autocrine way and promotes prostaglandin E2 synthesis that stimulates Wnt signaling pathway in ISCs and tissue regeneration. May participate in hair follicle morphogenesis by regulating phosphatidylethanolamines metabolism at the outermost epithelial layer and facilitating melanin synthesis. By releasing lysophosphatidylcholines (LPCs) at sperm acrosome, controls sperm cell capacitation, acrosome reaction and overall fertility. May promote neurite outgrowth in neuron fibers involved in nociception. Contributes to lipid remodeling of cellular membranes and generation of lipid mediators involved in pathogen clearance. Cleaves sn-2 fatty acyl chains of phosphatidylglycerols and phosphatidylethanolamines, which are major components of membrane phospholipids in bacteria. Displays bactericidal activity against Gram-positive bacteria by directly hydrolyzing phospholipids of the bacterial membrane. In pulmonary epithelium, may contribute to host defense response against adenoviral infection. Prevents adenovirus entry into host cells by hydrolyzing host cell plasma membrane, releasing C16:0 LPCs that inhibit virus-mediated membrane fusion and viral infection. Likely prevents adenoviral entry into the endosomes of host cells. May play a role in maturation and activation of innate immune cells including macrophages, group 2 innate lymphoid cells and mast cells. This chain is Group 10 secretory phospholipase A2 (PLA2G10), found in Homo sapiens (Human).